An 883-amino-acid chain; its full sequence is Alanine--tRNA ligase (883 aa).

H563, H567, C677, and H681 together coordinate Zn(2+).

This sequence belongs to the class-II aminoacyl-tRNA synthetase family. Zn(2+) serves as cofactor.

The protein resides in the cytoplasm. The enzyme catalyses tRNA(Ala) + L-alanine + ATP = L-alanyl-tRNA(Ala) + AMP + diphosphate. Catalyzes the attachment of alanine to tRNA(Ala) in a two-step reaction: alanine is first activated by ATP to form Ala-AMP and then transferred to the acceptor end of tRNA(Ala). Also edits incorrectly charged Ser-tRNA(Ala) and Gly-tRNA(Ala) via its editing domain. In Cereibacter sphaeroides (strain ATCC 17029 / ATH 2.4.9) (Rhodobacter sphaeroides), this protein is Alanine--tRNA ligase.